The primary structure comprises 486 residues: ATP synthase subunit beta (486 aa).

An ATP-binding site is contributed by 170–177; it reads GGAGVGKT.

This sequence belongs to the ATPase alpha/beta chains family. As to quaternary structure, F-type ATPases have 2 components, CF(1) - the catalytic core - and CF(0) - the membrane proton channel. CF(1) has five subunits: alpha(3), beta(3), gamma(1), delta(1), epsilon(1). CF(0) has three main subunits: a(1), b(2) and c(9-12). The alpha and beta chains form an alternating ring which encloses part of the gamma chain. CF(1) is attached to CF(0) by a central stalk formed by the gamma and epsilon chains, while a peripheral stalk is formed by the delta and b chains.

It localises to the cell membrane. It catalyses the reaction ATP + H2O + 4 H(+)(in) = ADP + phosphate + 5 H(+)(out). Its function is as follows. Produces ATP from ADP in the presence of a proton gradient across the membrane. The catalytic sites are hosted primarily by the beta subunits. In Clavibacter michiganensis subsp. michiganensis (strain NCPPB 382), this protein is ATP synthase subunit beta.